A 1073-amino-acid chain; its full sequence is Carbamoyl phosphate synthase large chain (1073 aa).

A carboxyphosphate synthetic domain region spans residues 1–399 (MPKREDIKKV…SLLKAFKSLD (399 aa)). Residues R129, R169, G175, G176, E208, V210, E215, G241, V242, H243, Q284, and E296 each contribute to the ATP site. One can recognise an ATP-grasp 1 domain in the interval 133–325 (KETMLSIGEK…IARVTAKIAI (193 aa)). Residues Q284, E296, and N298 each coordinate Mg(2+). Residues Q284, E296, and N298 each coordinate Mn(2+). Positions 400–540 (IDNQLGIKRW…YSTYEDTCET (141 aa)) are oligomerization domain. Residues 541–931 (NSTDKKKILI…YKAELAADNL (391 aa)) form a carbamoyl phosphate synthetic domain region. The region spanning 672 to 863 (YLLMQELGIP…LAKIAAKVIA (192 aa)) is the ATP-grasp 2 domain. R708, D747, L749, E754, G779, V780, H781, S782, Q822, and E834 together coordinate ATP. Residues Q822, E834, and N836 each coordinate Mg(2+). The Mn(2+) site is built by Q822, E834, and N836. The region spanning 930-1071 (NLLPLTGKVF…NEYHKEMEQK (142 aa)) is the MGS-like domain. Residues 932-1073 (LPLTGKVFLS…YHKEMEQKEE (142 aa)) form an allosteric domain region.

It belongs to the CarB family. As to quaternary structure, composed of two chains; the small (or glutamine) chain promotes the hydrolysis of glutamine to ammonia, which is used by the large (or ammonia) chain to synthesize carbamoyl phosphate. Tetramer of heterodimers (alpha,beta)4. Mg(2+) serves as cofactor. Requires Mn(2+) as cofactor.

The catalysed reaction is hydrogencarbonate + L-glutamine + 2 ATP + H2O = carbamoyl phosphate + L-glutamate + 2 ADP + phosphate + 2 H(+). The enzyme catalyses hydrogencarbonate + NH4(+) + 2 ATP = carbamoyl phosphate + 2 ADP + phosphate + 2 H(+). It participates in amino-acid biosynthesis; L-arginine biosynthesis; carbamoyl phosphate from bicarbonate: step 1/1. The protein operates within pyrimidine metabolism; UMP biosynthesis via de novo pathway; (S)-dihydroorotate from bicarbonate: step 1/3. In terms of biological role, large subunit of the glutamine-dependent carbamoyl phosphate synthetase (CPSase). CPSase catalyzes the formation of carbamoyl phosphate from the ammonia moiety of glutamine, carbonate, and phosphate donated by ATP, constituting the first step of 2 biosynthetic pathways, one leading to arginine and/or urea and the other to pyrimidine nucleotides. The large subunit (synthetase) binds the substrates ammonia (free or transferred from glutamine from the small subunit), hydrogencarbonate and ATP and carries out an ATP-coupled ligase reaction, activating hydrogencarbonate by forming carboxy phosphate which reacts with ammonia to form carbamoyl phosphate. The polypeptide is Carbamoyl phosphate synthase large chain (Methanosarcina mazei (strain ATCC BAA-159 / DSM 3647 / Goe1 / Go1 / JCM 11833 / OCM 88) (Methanosarcina frisia)).